The chain runs to 680 residues: DNA-directed RNA polymerase subunit beta' (680 aa).

Cys69, Cys71, Cys87, and Cys90 together coordinate Zn(2+). Mg(2+)-binding residues include Asp489, Asp491, and Asp493.

It belongs to the RNA polymerase beta' chain family. RpoC1 subfamily. As to quaternary structure, in plastids the minimal PEP RNA polymerase catalytic core is composed of four subunits: alpha, beta, beta', and beta''. When a (nuclear-encoded) sigma factor is associated with the core the holoenzyme is formed, which can initiate transcription. Mg(2+) is required as a cofactor. The cofactor is Zn(2+).

Its subcellular location is the plastid. The protein localises to the chloroplast. The catalysed reaction is RNA(n) + a ribonucleoside 5'-triphosphate = RNA(n+1) + diphosphate. DNA-dependent RNA polymerase catalyzes the transcription of DNA into RNA using the four ribonucleoside triphosphates as substrates. The protein is DNA-directed RNA polymerase subunit beta' of Olimarabidopsis pumila (Dwarf rocket).